The primary structure comprises 138 residues: ATP synthase epsilon chain (138 aa).

Residues D88 to Q119 are disordered. A compositionally biased stretch (basic and acidic residues) spans S109–Q119.

It belongs to the ATPase epsilon chain family. As to quaternary structure, F-type ATPases have 2 components, CF(1) - the catalytic core - and CF(0) - the membrane proton channel. CF(1) has five subunits: alpha(3), beta(3), gamma(1), delta(1), epsilon(1). CF(0) has three main subunits: a, b and c.

It localises to the cellular thylakoid membrane. In terms of biological role, produces ATP from ADP in the presence of a proton gradient across the membrane. In Acaryochloris marina (strain MBIC 11017), this protein is ATP synthase epsilon chain.